Here is a 229-residue protein sequence, read N- to C-terminus: Heptaprenylglyceryl phosphate synthase (229 aa).

Residue K12 participates in sn-glycerol 1-phosphate binding. 2 residues coordinate Mg(2+): D14 and S40. Residues 159 to 164 (YLEYSG), G189, and 209 to 210 (GN) each bind sn-glycerol 1-phosphate.

The protein belongs to the GGGP/HepGP synthase family. Group I subfamily. As to quaternary structure, homodimer. It depends on Mg(2+) as a cofactor.

It catalyses the reaction sn-glycerol 1-phosphate + all-trans-heptaprenyl diphosphate = 3-heptaprenyl-sn-glycero-1-phosphate + diphosphate. The protein operates within membrane lipid metabolism; glycerophospholipid metabolism. Prenyltransferase that catalyzes in vivo the transfer of the heptaprenyl moiety of heptaprenyl pyrophosphate (HepPP; 35 carbon atoms) to the C3 hydroxyl of sn-glycerol-1-phosphate (G1P), producing heptaprenylglyceryl phosphate (HepGP). This reaction is an ether-bond-formation step in the biosynthesis of archaea-type G1P-based membrane lipids found in Bacillales. This chain is Heptaprenylglyceryl phosphate synthase, found in Bacillus cytotoxicus (strain DSM 22905 / CIP 110041 / 391-98 / NVH 391-98).